A 303-amino-acid polypeptide reads, in one-letter code: tRNA pseudouridine synthase B (303 aa).

Asp46 (nucleophile) is an active-site residue.

Belongs to the pseudouridine synthase TruB family. Type 1 subfamily.

The enzyme catalyses uridine(55) in tRNA = pseudouridine(55) in tRNA. Its function is as follows. Responsible for synthesis of pseudouridine from uracil-55 in the psi GC loop of transfer RNAs. This is tRNA pseudouridine synthase B from Hydrogenovibrio crunogenus (strain DSM 25203 / XCL-2) (Thiomicrospira crunogena).